Here is a 306-residue protein sequence, read N- to C-terminus: Palmitoyl-protein thioesterase 1 (306 aa).

Positions 1-27 (MASPGCLWLLAVALLPWTCASRALQHL) are cleaved as a signal peptide. Cys-6 carries S-palmitoyl cysteine; by ZDHHC3 and ZDHHC7 lipidation. Disulfide bonds link Cys-45–Cys-46, Cys-96–Cys-128, and Cys-152–Cys-160. Residue Ser-115 is part of the active site. N-linked (GlcNAc...) asparagine glycans are attached at residues Asn-197, Asn-212, and Asn-232. Residues Asp-233 and His-289 contribute to the active site.

The protein belongs to the palmitoyl-protein thioesterase family. As to quaternary structure, interacts with CLN5. Interacts with ATP5F1A and ATP5F1B. Glycosylated.

The protein localises to the lysosome. It is found in the secreted. It localises to the golgi apparatus. Its subcellular location is the endoplasmic reticulum. The enzyme catalyses S-hexadecanoyl-L-cysteinyl-[protein] + H2O = L-cysteinyl-[protein] + hexadecanoate + H(+). It carries out the reaction hexadecanoyl-CoA + H2O = hexadecanoate + CoA + H(+). It catalyses the reaction S-hexadecanoyl-N-acetylcysteamine + H2O = N-acetylcysteamine + hexadecanoate + H(+). The catalysed reaction is S-hexadecanoyl-N-acetylcysteine methyl ester + H2O = N-acetylcysteine methyl ester + hexadecanoate + H(+). With respect to regulation, palmitoylation reduces PPT1 enzymatic activity. Has thioesterase activity against fatty acid thioesters with 14 -18 carbons, including palmitoyl-CoA, S-palmitoyl-N-acetylcysteamine, and palmitoylated proteins. In contrast to PPT2, PPT1 can hydrolyze palmitoylated proteins and palmitoylcysteine. The sequence is that of Palmitoyl-protein thioesterase 1 (PPT1) from Homo sapiens (Human).